The primary structure comprises 407 residues: Chorismate synthase (407 aa).

2 residues coordinate NADP(+): R40 and R46. FMN-binding positions include 138-140 and 259-260; these read RAS and QA. Residues 275–284 are compositionally biased toward basic and acidic residues; sequence RRGSRAHDEM. The interval 275–308 is disordered; that stretch reads RRGSRAHDEMYPGTDGVVRSTNRAGGLEGGMTNG. Residues G303, 318-322, and R344 contribute to the FMN site; that span reads KPIST.

It belongs to the chorismate synthase family. In terms of assembly, homotetramer. The cofactor is FMNH2.

It carries out the reaction 5-O-(1-carboxyvinyl)-3-phosphoshikimate = chorismate + phosphate. Its pathway is metabolic intermediate biosynthesis; chorismate biosynthesis; chorismate from D-erythrose 4-phosphate and phosphoenolpyruvate: step 7/7. In terms of biological role, catalyzes the anti-1,4-elimination of the C-3 phosphate and the C-6 proR hydrogen from 5-enolpyruvylshikimate-3-phosphate (EPSP) to yield chorismate, which is the branch point compound that serves as the starting substrate for the three terminal pathways of aromatic amino acid biosynthesis. This reaction introduces a second double bond into the aromatic ring system. This chain is Chorismate synthase, found in Mycobacterium ulcerans (strain Agy99).